A 241-amino-acid chain; its full sequence is Acetoacetyl-CoA reductase (241 aa).

Residues 12-14 (RGI), R39, and 82-86 (NAGIT) contribute to the NADP(+) site. Substrate-binding positions include D88 and 141-144 (QMGQ). Catalysis depends on Y147, which acts as the Proton acceptor. 177–180 (PGYI) is an NADP(+) binding site. 178–179 (GY) contributes to the substrate binding site.

This sequence belongs to the short-chain dehydrogenases/reductases (SDR) family.

It localises to the cytoplasm. The catalysed reaction is a (3R)-3-hydroxyacyl-CoA + NADP(+) = a 3-oxoacyl-CoA + NADPH + H(+). It functions in the pathway biopolymer metabolism; poly-(R)-3-hydroxybutanoate biosynthesis. The chain is Acetoacetyl-CoA reductase from Rhizobium meliloti (strain 1021) (Ensifer meliloti).